The primary structure comprises 509 residues: Pentatricopeptide repeat-containing protein At2g13420, mitochondrial (509 aa).

The N-terminal 19 residues, 1–19, are a transit peptide targeting the mitochondrion; sequence MLLLKQISPPFHLHQLRRR. PPR repeat units lie at residues 172–202, 206–240, 241–285, 286–320, 321–355, 356–390, 391–425, and 426–460; these read RLVEFGFLLDTLCKYGYTKMAVGVFNERKEE, DEKVYTILIAGWCKLRRIDMAEKFLVEMIESGIEP, NVVT…GIEP, DVTSFSIVLHMYSRAHKAELTLDKMKLMKAKGISP, TIETYTSVVKCLCSCGRLEEAEELLETMVESGISP, SSATYNCFFKEYKGRKDANGAMNLYRKMKNGLCKP, STQTYNVLLGTFINLGKMETVKEIWDDLKASETGP, and DLDSYTSLVHGLCSKEKWKEACGYFVEMIERGFLP.

Belongs to the PPR family. P subfamily.

The protein resides in the mitochondrion. The polypeptide is Pentatricopeptide repeat-containing protein At2g13420, mitochondrial (Arabidopsis thaliana (Mouse-ear cress)).